The following is a 299-amino-acid chain: Lathosterol oxidase (299 aa).

3 consecutive transmembrane segments (helical) span residues 32–52 (ISLLIVTNVGAYILYFFCATL), 79–99 (FTVQALPWISILTVALFLLEI), and 117–137 (FELVVSIISFLFFTDMFIYWI). The Fatty acid hydroxylase domain occupies 124 to 252 (ISFLFFTDMF…YFTLWDRIGG (129 aa)). Residues 138-143 (HRGLHH) carry the Histidine box-1 motif. The Histidine box-2 motif lies at 151-155 (HKPHH). Residues 186–206 (IFPLHKVVYLSLYILVNIWTI) form a helical membrane-spanning segment. The Histidine box-3 motif lies at 228–233 (HHTDHH). Serine 253 carries the post-translational modification Phosphoserine. Residues 274–299 (EGKRSSHSGNGCKNEKLFNGEFTKTE) are disordered. Positions 286-299 (KNEKLFNGEFTKTE) are enriched in basic and acidic residues.

This sequence belongs to the sterol desaturase family. The cofactor is Fe cation.

It localises to the endoplasmic reticulum membrane. It carries out the reaction a Delta(7)-sterol + 2 Fe(II)-[cytochrome b5] + O2 + 2 H(+) = a Delta(5),Delta(7)-sterol + 2 Fe(III)-[cytochrome b5] + 2 H2O. It catalyses the reaction lathosterol + 2 Fe(II)-[cytochrome b5] + O2 + 2 H(+) = 7-dehydrocholesterol + 2 Fe(III)-[cytochrome b5] + 2 H2O. The catalysed reaction is 5alpha-cholesta-7,24-dien-3beta-ol + 2 Fe(II)-[cytochrome b5] + O2 + 2 H(+) = 7-dehydrodesmosterol + 2 Fe(III)-[cytochrome b5] + 2 H2O. The protein operates within steroid biosynthesis; cholesterol biosynthesis. In terms of biological role, catalyzes the penultimate step of the biosynthesis of cholesterol, the dehydrogenation of lathosterol into 7-dehydrocholesterol (7-DHC). Cholesterol is the major sterol component in mammalian membranes and a precursor for bile acid and steroid hormone synthesis. In addition to its essential role in cholesterol biosynthesis, it also indirectly regulates ferroptosis through the production of 7-DHC. By diverting the spread of damage caused by peroxyl radicals from the phospholipid components to its sterol nucleus, 7-DHC prevents this form of cell death. The chain is Lathosterol oxidase from Homo sapiens (Human).